A 143-amino-acid chain; its full sequence is Large ribosomal subunit protein uL16c (143 aa).

It belongs to the universal ribosomal protein uL16 family. As to quaternary structure, part of the 50S ribosomal subunit.

It is found in the plastid. The protein localises to the chloroplast. This is Large ribosomal subunit protein uL16c from Marchantia polymorpha (Common liverwort).